We begin with the raw amino-acid sequence, 260 residues long: Recombination-promoting nuclease RpnD (260 aa).

Belongs to the Rpn/YhgA-like nuclease family.

Functionally, a low activity DNA endonuclease probably yielding 3'-hydroxyl ends. Involved in RecA-independent recombination and horizontal gene transfer. This chain is Recombination-promoting nuclease RpnD (rpnD), found in Escherichia coli O157:H7.